The following is a 585-amino-acid chain: Adenine deaminase (585 aa).

It belongs to the metallo-dependent hydrolases superfamily. Adenine deaminase family. It depends on Mn(2+) as a cofactor.

The enzyme catalyses adenine + H2O + H(+) = hypoxanthine + NH4(+). The sequence is that of Adenine deaminase from Halalkalibacterium halodurans (strain ATCC BAA-125 / DSM 18197 / FERM 7344 / JCM 9153 / C-125) (Bacillus halodurans).